The following is a 533-amino-acid chain: Glycogen synthase (533 aa).

Lys-12 is an ADP-alpha-D-glucose binding site. The disordered stretch occupies residues Ala-497 to Lys-533. Basic and acidic residues predominate over residues Ala-512–Ala-525.

The protein belongs to the glycosyltransferase 1 family. Bacterial/plant glycogen synthase subfamily.

The enzyme catalyses [(1-&gt;4)-alpha-D-glucosyl](n) + ADP-alpha-D-glucose = [(1-&gt;4)-alpha-D-glucosyl](n+1) + ADP + H(+). It functions in the pathway glycan biosynthesis; glycogen biosynthesis. Functionally, synthesizes alpha-1,4-glucan chains using ADP-glucose. The chain is Glycogen synthase from Burkholderia thailandensis (strain ATCC 700388 / DSM 13276 / CCUG 48851 / CIP 106301 / E264).